A 252-amino-acid polypeptide reads, in one-letter code: Imidazole glycerol phosphate synthase subunit HisF (252 aa).

Residues aspartate 11 and aspartate 130 contribute to the active site.

Belongs to the HisA/HisF family. In terms of assembly, heterodimer of HisH and HisF.

It localises to the cytoplasm. It catalyses the reaction 5-[(5-phospho-1-deoxy-D-ribulos-1-ylimino)methylamino]-1-(5-phospho-beta-D-ribosyl)imidazole-4-carboxamide + L-glutamine = D-erythro-1-(imidazol-4-yl)glycerol 3-phosphate + 5-amino-1-(5-phospho-beta-D-ribosyl)imidazole-4-carboxamide + L-glutamate + H(+). It functions in the pathway amino-acid biosynthesis; L-histidine biosynthesis; L-histidine from 5-phospho-alpha-D-ribose 1-diphosphate: step 5/9. In terms of biological role, IGPS catalyzes the conversion of PRFAR and glutamine to IGP, AICAR and glutamate. The HisF subunit catalyzes the cyclization activity that produces IGP and AICAR from PRFAR using the ammonia provided by the HisH subunit. This is Imidazole glycerol phosphate synthase subunit HisF from Bacillus cereus (strain ATCC 10987 / NRS 248).